Consider the following 371-residue polypeptide: tRNA-specific 2-thiouridylase MnmA (371 aa).

Residues G22–S29 and M48 each bind ATP. Residues N108–D110 form an interaction with target base in tRNA region. The active-site Nucleophile is C113. A disulfide bridge connects residues C113 and C209. An ATP-binding site is contributed by G137. Positions K159–Q161 are interaction with tRNA. C209 acts as the Cysteine persulfide intermediate in catalysis.

The protein belongs to the MnmA/TRMU family.

The protein resides in the cytoplasm. It catalyses the reaction S-sulfanyl-L-cysteinyl-[protein] + uridine(34) in tRNA + AH2 + ATP = 2-thiouridine(34) in tRNA + L-cysteinyl-[protein] + A + AMP + diphosphate + H(+). In terms of biological role, catalyzes the 2-thiolation of uridine at the wobble position (U34) of tRNA, leading to the formation of s(2)U34. The protein is tRNA-specific 2-thiouridylase MnmA of Coxiella burnetii (strain CbuK_Q154) (Coxiella burnetii (strain Q154)).